A 698-amino-acid polypeptide reads, in one-letter code: Polyribonucleotide nucleotidyltransferase (698 aa).

Residues D485 and D491 each contribute to the Mg(2+) site. Residues 552–612 (PRVEMMTIPE…SDLKGAKSIV (61 aa)) enclose the KH domain. The S1 motif domain maps to 622–690 (GMVYDGTVKK…KLGRLNLSYV (69 aa)).

This sequence belongs to the polyribonucleotide nucleotidyltransferase family. Requires Mg(2+) as cofactor.

The protein localises to the cytoplasm. It carries out the reaction RNA(n+1) + phosphate = RNA(n) + a ribonucleoside 5'-diphosphate. Involved in mRNA degradation. Catalyzes the phosphorolysis of single-stranded polyribonucleotides processively in the 3'- to 5'-direction. This is Polyribonucleotide nucleotidyltransferase from Treponema denticola (strain ATCC 35405 / DSM 14222 / CIP 103919 / JCM 8153 / KCTC 15104).